The following is a 238-amino-acid chain: ATP-dependent dethiobiotin synthetase BioD (238 aa).

12 to 17 (EVGKTV) is an ATP binding site. Residue T16 coordinates Mg(2+). K37 is a catalytic residue. Residue T41 participates in substrate binding. ATP is bound by residues D50, 109–112 (EGAG), 170–171 (GS), and 200–202 (PAG). Mg(2+) is bound by residues D50 and E109.

It belongs to the dethiobiotin synthetase family. In terms of assembly, homodimer. Requires Mg(2+) as cofactor.

Its subcellular location is the cytoplasm. It catalyses the reaction (7R,8S)-7,8-diammoniononanoate + CO2 + ATP = (4R,5S)-dethiobiotin + ADP + phosphate + 3 H(+). It participates in cofactor biosynthesis; biotin biosynthesis; biotin from 7,8-diaminononanoate: step 1/2. In terms of biological role, catalyzes a mechanistically unusual reaction, the ATP-dependent insertion of CO2 between the N7 and N8 nitrogen atoms of 7,8-diaminopelargonic acid (DAPA, also called 7,8-diammoniononanoate) to form a ureido ring. In Streptomyces avermitilis (strain ATCC 31267 / DSM 46492 / JCM 5070 / NBRC 14893 / NCIMB 12804 / NRRL 8165 / MA-4680), this protein is ATP-dependent dethiobiotin synthetase BioD.